Reading from the N-terminus, the 459-residue chain is Hepatocyte nuclear factor 3-beta (459 aa).

The interval 14–93 (DWSSYYAEPE…AGAMAGMSGS (80 aa)) is transactivation domain 1. A Nuclear localization signal motif is present at residues 106–113 (LSPSLSPL). Phosphothreonine is present on Thr156. The segment at residues 159-252 (KPPYSYISLI…FENGCYLRRQ (94 aa)) is a DNA-binding region (fork-head). Ser212 carries the post-translational modification Phosphoserine. The span at 268 to 281 (GAASSGGKKTAPGS) shows a compositional bias: low complexity. A disordered region spans residues 268–366 (GAASSGGKKT…PGLPPEAHLK (99 aa)). Ser284 is subject to Phosphoserine. Polar residues predominate over residues 295 to 311 (ASETPAGTESPHSSASP). A Phosphothreonine modification is found at Thr302. Phosphoserine is present on residues Ser304, Ser307, Ser308, and Ser310. Residues 340–353 (PGQQQQAAAHLLGP) are compositionally biased toward low complexity. Residues 362–459 (EAHLKPEHHY…VYSRPIMNSS (98 aa)) are transactivation domain 2. Phosphoserine occurs at positions 438 and 459.

In terms of assembly, binds DNA as a monomer. Binds TLE1. Interacts with FOXA1 and FOXA3. Interacts with PRKDC. Interacts with AKT1. Interacts with TET1; this interaction may recruit TET1 to specific genomic loci to mediate their demethylation. Post-translationally, phosphorylation on Thr-156 abolishes binding to target promoters and subsequent transcription activation upon insulin stimulation. Restricted mainly to endoderm-derived tissues (lung, liver, stomach, and small intestine). Expressed in epididymis with region-specific expression pattern: no expression is observed in initial segment, low expression in proximal caput, gradiently higher levels of expression in middle and distal caput and highest level in corpus and cauda (at protein level).

It localises to the nucleus. The protein localises to the cytoplasm. Transcription factor that is involved in embryonic development, establishment of tissue-specific gene expression and regulation of gene expression in differentiated tissues. Is thought to act as a 'pioneer' factor opening the compacted chromatin for other proteins through interactions with nucleosomal core histones and thereby replacing linker histones at target enhancer and/or promoter sites. Binds DNA with the consensus sequence 5'-[AC]A[AT]T[AG]TT[GT][AG][CT]T[CT]-3'. In embryonic development is required for notochord formation. Involved in the development of multiple endoderm-derived organ systems such as the liver, pancreas and lungs; Foxa1 and Foxa2 seem to have at least in part redundant roles. FOXA1 and FOXA2 are essential for hepatic specification. FOXA1 and FOXA2 are required for morphogenesis and cell differentiation during formation of the lung. FOXA1 and FOXA2 are involved in bile duct formation; they positively regulate the binding glucocorticoid receptor/NR3C1 to the IL6 promoter. FOXA1 and FOXA2 regulate multiple phases of midbrain dopaminergic neuron development; they regulate expression of NEUROG2 at the beginning of mDA neurogenesis and of NR4A2 and EN1 in immature mDA neurons. Modulates the transcriptional activity of nuclear hormone receptors; inhibits AR-mediated transcription from the LCN5 promoter. Binds to fibrinogen beta promoter and is involved in IL6-induced fibrinogen beta transcriptional activation. Originally described as a transcription activator for a number of liver genes such as AFP, albumin, tyrosine aminotransferase, PEPCK, etc. Interacts with the cis-acting regulatory regions of these genes. Involved in glucose homeostasis; regulates the expression of genes important for glucose sensing in pancreatic beta-cells and glucose homeostasis. In pancreatic beta cells activates transcription of potassium channel subunits KCNJ11 and ABCC8. Involved in regulation of fat metabolism; activates transcriptional programs of lipid metabolism and ketogenesis at low insulin state. Involved in transcriptional regulation of MUC2 in the intestine. The chain is Hepatocyte nuclear factor 3-beta (Foxa2) from Mus musculus (Mouse).